A 310-amino-acid polypeptide reads, in one-letter code: Putative HTH-type transcriptional regulatory protein LS215_1371 (310 aa).

The HTH cro/C1-type domain maps to 125 to 180; it reads LKHKREEMGYSIGDVAKFLGVSRKAIYDYEKGDSDVSLEVAEKLIDLFGDDIIGDV. The segment at residues 136-155 is a DNA-binding region (H-T-H motif); the sequence is IGDVAKFLGVSRKAIYDYEK.

This Saccharolobus islandicus (strain L.S.2.15 / Lassen #1) (Sulfolobus islandicus) protein is Putative HTH-type transcriptional regulatory protein LS215_1371.